Reading from the N-terminus, the 596-residue chain is Phosphoenolpyruvate carboxykinase [GTP] (596 aa).

Substrate contacts are provided by residues R77 and 205–207; that span reads YGG. Mn(2+) is bound by residues K214 and H234. S256 contributes to the substrate binding site. Residue 257-262 participates in GTP binding; the sequence is ACGKTN. C258 is a catalytic residue. D283 is a Mn(2+) binding site. The segment at 362-388 is disordered; that stretch reads KKGSTEKAAHPNSRFTAPAKNNPAISP. Residue 373–375 coordinates substrate; that stretch reads NSR. Residues R375, R406, and 499-502 each bind GTP; that span reads YGDN.

It belongs to the phosphoenolpyruvate carboxykinase [GTP] family. As to quaternary structure, monomer. Mn(2+) serves as cofactor.

It localises to the cytoplasm. The enzyme catalyses oxaloacetate + GTP = phosphoenolpyruvate + GDP + CO2. It functions in the pathway carbohydrate biosynthesis; gluconeogenesis. Its function is as follows. Catalyzes the conversion of oxaloacetate (OAA) to phosphoenolpyruvate (PEP), the rate-limiting step in the metabolic pathway that produces glucose from lactate and other precursors derived from the citric acid cycle. The sequence is that of Phosphoenolpyruvate carboxykinase [GTP] from Anaeromyxobacter dehalogenans (strain 2CP-1 / ATCC BAA-258).